Reading from the N-terminus, the 197-residue chain is MLLIGITGMPGAGKSSAYEIAKKYNLPIVSMGDVVRYETKKRGLELTPENVGNTAIKLREEFGNEAIAVACLKYIEENLKDKEIVIVEGIRSLYEVNYFRKHKPLVLIAIHSSPLTRFERLKKRGREDDSANWEVFVERDLRELGFSIGHAIALADFVVVNEKSFEDCLNQLDNILQEILNNLEKYKKYNFIYETLR.

Residue 8–15 coordinates ATP; sequence GMPGAGKS.

It belongs to the UPF0200 family.

This Methanocaldococcus jannaschii (strain ATCC 43067 / DSM 2661 / JAL-1 / JCM 10045 / NBRC 100440) (Methanococcus jannaschii) protein is UPF0200 protein MJ1399.